A 443-amino-acid polypeptide reads, in one-letter code: Pentatricopeptide repeat-containing protein 6, mitochondrial (443 aa).

The N-terminal 13 residues, 1 to 13 (MRILGSLPNNIRK), are a transit peptide targeting the mitochondrion. 2 PPR repeats span residues 130-164 (NIVD…RIRP) and 220-254 (NSTT…NENS).

The protein localises to the mitochondrion. Functionally, mitochondrial RNA-binding protein required for the stability of the atp9 mRNA. This chain is Pentatricopeptide repeat-containing protein 6, mitochondrial (ppr6), found in Schizosaccharomyces pombe (strain 972 / ATCC 24843) (Fission yeast).